The chain runs to 281 residues: Undecaprenyl-diphosphatase (281 aa).

Helical transmembrane passes span 90 to 110, 113 to 133, 147 to 167, 191 to 211, 217 to 237, and 257 to 277; these read WLVT…QDSI, VLRG…VLGA, LSWK…IPGV, SFLL…YDEL, IAWV…YAVI, and IAAA…AFQG.

It belongs to the UppP family.

It localises to the cell membrane. The enzyme catalyses di-trans,octa-cis-undecaprenyl diphosphate + H2O = di-trans,octa-cis-undecaprenyl phosphate + phosphate + H(+). Catalyzes the dephosphorylation of undecaprenyl diphosphate (UPP). Confers resistance to bacitracin. The protein is Undecaprenyl-diphosphatase of Kineococcus radiotolerans (strain ATCC BAA-149 / DSM 14245 / SRS30216).